The chain runs to 240 residues: UDP-2,3-diacylglucosamine hydrolase (240 aa).

Asp8, His10, Asp41, Asn79, and His114 together coordinate Mn(2+). 79–80 (NR) serves as a coordination point for substrate. The substrate site is built by Asp122, Ser160, Asn164, Lys167, and His195. His195 and His197 together coordinate Mn(2+).

It belongs to the LpxH family. The cofactor is Mn(2+).

It is found in the cell inner membrane. The catalysed reaction is UDP-2-N,3-O-bis[(3R)-3-hydroxytetradecanoyl]-alpha-D-glucosamine + H2O = 2-N,3-O-bis[(3R)-3-hydroxytetradecanoyl]-alpha-D-glucosaminyl 1-phosphate + UMP + 2 H(+). Its pathway is glycolipid biosynthesis; lipid IV(A) biosynthesis; lipid IV(A) from (3R)-3-hydroxytetradecanoyl-[acyl-carrier-protein] and UDP-N-acetyl-alpha-D-glucosamine: step 4/6. In terms of biological role, hydrolyzes the pyrophosphate bond of UDP-2,3-diacylglucosamine to yield 2,3-diacylglucosamine 1-phosphate (lipid X) and UMP by catalyzing the attack of water at the alpha-P atom. Involved in the biosynthesis of lipid A, a phosphorylated glycolipid that anchors the lipopolysaccharide to the outer membrane of the cell. The protein is UDP-2,3-diacylglucosamine hydrolase of Escherichia coli O157:H7.